A 100-amino-acid polypeptide reads, in one-letter code: uncharacterized protein (100 aa).

The first 17 residues, 1–17 (MIMKYFCSVMIAIALVG), serve as a signal peptide directing secretion. C18 carries the N-palmitoyl cysteine lipid modification. Residue C18 is the site of S-diacylglycerol cysteine attachment.

It localises to the cell membrane. This is an uncharacterized protein from Salmonella choleraesuis (strain SC-B67).